Reading from the N-terminus, the 511-residue chain is Portal protein (511 aa).

This sequence belongs to the Tevenvirinae portal protein family. As to quaternary structure, homododecamer. Interacts with the large terminase subunit. Interacts with the major capsid protein. Interacts with the capsid vertex protein.

The protein resides in the virion. Its function is as follows. Forms the portal vertex of the capsid. This portal plays critical roles in head assembly, genome packaging, neck/tail attachment, and genome ejection. The portal protein multimerizes as a single ring-shaped homododecamer arranged around a central channel. Binds to the terminase subunits to form the packaging machine. This is Portal protein from Vibrio phage KVP40 (isolate Vibrio parahaemolyticus/Japan/Matsuzaki/1991) (KVP40).